A 952-amino-acid polypeptide reads, in one-letter code: Valine--tRNA ligase (952 aa).

The 'HIGH' region signature appears at 42-52 (PNVTGSLHMGH). A 'KMSKS' region motif is present at residues 554–558 (KMSKS). Lys-557 contacts ATP. Residues 888 to 952 (AELARLDGEI…EEQKKTIAAL (65 aa)) are a coiled coil.

This sequence belongs to the class-I aminoacyl-tRNA synthetase family. ValS type 1 subfamily. In terms of assembly, monomer.

It localises to the cytoplasm. The enzyme catalyses tRNA(Val) + L-valine + ATP = L-valyl-tRNA(Val) + AMP + diphosphate. Catalyzes the attachment of valine to tRNA(Val). As ValRS can inadvertently accommodate and process structurally similar amino acids such as threonine, to avoid such errors, it has a 'posttransfer' editing activity that hydrolyzes mischarged Thr-tRNA(Val) in a tRNA-dependent manner. The sequence is that of Valine--tRNA ligase from Vibrio parahaemolyticus serotype O3:K6 (strain RIMD 2210633).